The primary structure comprises 467 residues: MSKVASIVDVLQGKVAIGETVTVRGWVRTRRDSKAGLSFLAVYDGSCFDPIQAIINNDIENYESEILRLTTGCSVIVTGKVVESPAEGQAVELQAEKVEVTGFVEDPDTYPMAAKRHSIEYLREVAHLRPRTNIIGAVARVRHCLSQAIHRFFHEQGFYWVATPLITASDTEGAGEMFRVSTLDLENLPRSENGKVDFSQDFFGKESFLTVSGQLNGETYACALSKIYTFGPTFRAENSNTTRHLAEFWMVEPEVAFATLADNAKLAEDMLKYVFRAVLAERKDDLQFFEKHVDKDVITRLENFVNSDFAQIDYTDAIDVLLKSGKKFEFPVSWGIDLSSEHERFLAEEYFKSPVVVKNYPKDIKAFYMRLNDDEKTVAAMDVLAPGIGEIIGGSQREERLEVLDKRMEEMGLNPDDYWWYRDLRKYGSVPHSGFGLGFERLIVYVTGVQNIRDVIPFPRAPRNANF.

This sequence belongs to the class-II aminoacyl-tRNA synthetase family. In terms of assembly, homodimer.

The protein localises to the cytoplasm. It catalyses the reaction tRNA(Asn) + L-asparagine + ATP = L-asparaginyl-tRNA(Asn) + AMP + diphosphate + H(+). The sequence is that of Asparagine--tRNA ligase from Haemophilus influenzae (strain ATCC 51907 / DSM 11121 / KW20 / Rd).